Consider the following 107-residue polypeptide: YcgL domain-containing protein Pcryo_0807 (107 aa).

Residues Met-1–Leu-95 form the YcgL domain.

The protein is YcgL domain-containing protein Pcryo_0807 of Psychrobacter cryohalolentis (strain ATCC BAA-1226 / DSM 17306 / VKM B-2378 / K5).